The chain runs to 385 residues: Linearmycin resistance permease protein LnrN (385 aa).

The next 6 helical transmembrane spans lie at 22 to 42, 198 to 218, 239 to 259, 274 to 294, 305 to 325, and 360 to 380; these read YLIMFAAPLLLTFVFGSMLSG, AAGFSILFVMLTMMGAAGTIL, IGAGYVLSFFVIGWIQFGILL, AAVIVLVSLFLLTVVGIGLMI, LAFGNLFVIATCMVSGMYWPI, and DILGICGILLAFAAITFAAGL. The ABC transmembrane type-2 domain maps to 163–382; it reads KTVFAKKHED…AITFAAGLKA (220 aa).

This sequence belongs to the ABC-2 integral membrane protein family. As to quaternary structure, the complex is composed of two ATP-binding proteins (LnrL) and two transmembrane proteins (LnrM and LnrN).

Its subcellular location is the cell membrane. Required for resistance to linearmycins, a family of antibiotic-specialized metabolites produced by some streptomycetes. Part of the ABC transporter complex LnrLMN that probably facilitates linearmycin removal from the membrane. Responsible for the translocation of the substrate across the membrane. Also mediates KinC-dependent biofilm morphology. The protein is Linearmycin resistance permease protein LnrN of Bacillus subtilis (strain 168).